Reading from the N-terminus, the 288-residue chain is 4-diphosphocytidyl-2-C-methyl-D-erythritol kinase (288 aa).

Lys22 is a catalytic residue. Residue 104–114 (PSQAGLGGGSS) participates in ATP binding. The active site involves Asp146.

The protein belongs to the GHMP kinase family. IspE subfamily.

The enzyme catalyses 4-CDP-2-C-methyl-D-erythritol + ATP = 4-CDP-2-C-methyl-D-erythritol 2-phosphate + ADP + H(+). Its pathway is isoprenoid biosynthesis; isopentenyl diphosphate biosynthesis via DXP pathway; isopentenyl diphosphate from 1-deoxy-D-xylulose 5-phosphate: step 3/6. Functionally, catalyzes the phosphorylation of the position 2 hydroxy group of 4-diphosphocytidyl-2C-methyl-D-erythritol. The polypeptide is 4-diphosphocytidyl-2-C-methyl-D-erythritol kinase (Protochlamydia amoebophila (strain UWE25)).